A 352-amino-acid chain; its full sequence is Potassium/proton antiporter CemA (352 aa).

Helical transmembrane passes span V52–F72, I227–F247, and I312–I332.

The protein belongs to the CemA family.

It localises to the plastid. It is found in the chloroplast inner membrane. It catalyses the reaction K(+)(in) + H(+)(out) = K(+)(out) + H(+)(in). Contributes to K(+)/H(+) antiport activity by supporting proton efflux to control proton extrusion and homeostasis in chloroplasts in a light-dependent manner to modulate photosynthesis. Prevents excessive induction of non-photochemical quenching (NPQ) under continuous-light conditions. Indirectly promotes efficient inorganic carbon uptake into chloroplasts. The chain is Potassium/proton antiporter CemA from Oltmannsiellopsis viridis (Marine flagellate).